A 1433-amino-acid polypeptide reads, in one-letter code: CAP-Gly domain-containing linker protein 1 (1433 aa).

The tract at residues M1–A51 is disordered. Low complexity predominate over residues A32–A49. The CAP-Gly 1 domain maps to G79–R121. Residues D133–L208 are disordered. The span at T140–S168 shows a compositional bias: low complexity. The span at T184 to E204 shows a compositional bias: polar residues. In terms of domain architecture, CAP-Gly 2 spans G235 to P277. Over residues S319–R333 the composition is skewed to low complexity. The disordered stretch occupies residues S319 to T338. Residues T351–E1353 are a coiled coil. The CCHC-type zinc-finger motif lies at P1412–D1429.

The protein resides in the cytoplasm. It localises to the cytoskeleton. Its subcellular location is the cytoplasmic vesicle membrane. It is found in the cell projection. The protein localises to the ruffle. Binds to the plus end of microtubules and regulates the dynamics of the microtubule cytoskeleton. Promotes microtubule growth and microtubule bundling. Links cytoplasmic vesicles to microtubules and thereby plays an important role in intracellular vesicle trafficking. Plays a role macropinocytosis and endosome trafficking. The chain is CAP-Gly domain-containing linker protein 1 (CLIP1) from Gallus gallus (Chicken).